The sequence spans 374 residues: MRRVRTTRLFQVACAAIVALASSAMSAHATSRIKDLANIEGVRQNQLIGYGLVVGLNGTGDTLNNIPFTKQSLQAMLERMGVNIRGATIRTGNVAAVMVTGNLPPFATQGTRMDVTVSALGDAKNLQGGTLLVTPLLGADGNVYAVAQGSLAISGFQAEGEAAKIVRGVPTVGRIANGAIIEREIEFALNRLPNVRLALRNADFTTAKRIAAAINDFLGVKTAEPIDPSTVQLSIPPEFKGNVVAFLTEIEQLQVDPDLAAKIVIDERSGIIVMGRDVRVATVAVAQGNLTVTISESPQVSQPNPLSQGRTVVTPRTSVGVTEDGKKFAVVKDGVSLQQLVDGLNGLGIGPRDLISILQAIKAAGAIEADIEVM.

Residues 1–29 form the signal peptide; the sequence is MRRVRTTRLFQVACAAIVALASSAMSAHA.

It belongs to the FlgI family. In terms of assembly, the basal body constitutes a major portion of the flagellar organelle and consists of four rings (L,P,S, and M) mounted on a central rod.

It is found in the periplasm. It localises to the bacterial flagellum basal body. Assembles around the rod to form the L-ring and probably protects the motor/basal body from shearing forces during rotation. In Bradyrhizobium sp. (strain BTAi1 / ATCC BAA-1182), this protein is Flagellar P-ring protein.